A 324-amino-acid chain; its full sequence is N-acetyl-gamma-glutamyl-phosphate reductase (324 aa).

Residue C131 is part of the active site.

This sequence belongs to the NAGSA dehydrogenase family. Type 1 subfamily.

It is found in the cytoplasm. It carries out the reaction N-acetyl-L-glutamate 5-semialdehyde + phosphate + NADP(+) = N-acetyl-L-glutamyl 5-phosphate + NADPH + H(+). The protein operates within amino-acid biosynthesis; L-arginine biosynthesis; N(2)-acetyl-L-ornithine from L-glutamate: step 3/4. Catalyzes the NADPH-dependent reduction of N-acetyl-5-glutamyl phosphate to yield N-acetyl-L-glutamate 5-semialdehyde. The polypeptide is N-acetyl-gamma-glutamyl-phosphate reductase (Bradyrhizobium sp. (strain ORS 278)).